The primary structure comprises 216 residues: MAADPQSSVLLAFALLCLPWPQEVGAFPAMPLSSLFANAVLRAQHLHQLAADTYKEFERAYIPEGQRYSIQNAQAAFCFSETIPAPTGKDEAQQRSDVELLRFSLLLIQSWLGPVQFLSRVFTNSLVFGTSDRVYEKLKDLEEGIQALMRELEDGSPRAGQILKPTYDKFDTSLRSDDALLKNYGLLSCFKKDLHKAETYLRVMKCRRFVESSCAF.

An N-terminal signal peptide occupies residues 1-26 (MAADPQSSVLLAFALLCLPWPQEVGA). His-45 provides a ligand contact to Zn(2+). A disulfide bridge connects residues Cys-78 and Cys-189. Ser-131 bears the Phosphoserine mark. Position 198 (Glu-198) interacts with Zn(2+). A disulfide bond links Cys-206 and Cys-214.

The protein belongs to the somatotropin/prolactin family.

The protein localises to the secreted. Plays an important role in growth control. Its major role in stimulating body growth is to stimulate the liver and other tissues to secrete IGF1. It stimulates both the differentiation and proliferation of myoblasts. It also stimulates amino acid uptake and protein synthesis in muscle and other tissues. This Ailuropoda melanoleuca (Giant panda) protein is Somatotropin (GH1).